A 66-amino-acid chain; its full sequence is Large ribosomal subunit protein bL35 (66 aa).

A disordered region spans residues 25–45 (QAAGKRHGMSKRPQKMKRNAR). Residues 28–44 (GKRHGMSKRPQKMKRNA) are compositionally biased toward basic residues.

Belongs to the bacterial ribosomal protein bL35 family.

The polypeptide is Large ribosomal subunit protein bL35 (Rhodospirillum centenum (strain ATCC 51521 / SW)).